Consider the following 300-residue polypeptide: Spermine synthase SPE4 (300 aa).

S5 bears the Phosphoserine mark. The PABS domain maps to 12–255 (DGWFREINDK…GQLGLIVCSN (244 aa)). S-adenosyl 3-(methylsulfanyl)propylamine-binding positions include Q44, D99, E119, and 151 to 152 (DG). Catalysis depends on D174, which acts as the Proton acceptor. D177 is a binding site for spermidine.

It belongs to the spermidine/spermine synthase family.

The enzyme catalyses S-adenosyl 3-(methylsulfanyl)propylamine + spermidine = spermine + S-methyl-5'-thioadenosine + H(+). Its pathway is amine and polyamine biosynthesis; spermine biosynthesis; spermine from spermidine: step 1/1. The chain is Spermine synthase SPE4 (SPE4) from Saccharomyces cerevisiae (strain ATCC 204508 / S288c) (Baker's yeast).